Here is a 177-residue protein sequence, read N- to C-terminus: Large ribosomal subunit protein uL10 (177 aa).

It belongs to the universal ribosomal protein uL10 family. Part of the ribosomal stalk of the 50S ribosomal subunit. The N-terminus interacts with L11 and the large rRNA to form the base of the stalk. The C-terminus forms an elongated spine to which L12 dimers bind in a sequential fashion forming a multimeric L10(L12)X complex.

Its function is as follows. Forms part of the ribosomal stalk, playing a central role in the interaction of the ribosome with GTP-bound translation factors. In Leptospira borgpetersenii serovar Hardjo-bovis (strain JB197), this protein is Large ribosomal subunit protein uL10.